A 430-amino-acid polypeptide reads, in one-letter code: Aspartate aminotransferase, mitochondrial (430 aa).

A mitochondrion-targeting transit peptide spans 1–29 (MALLHSGRVLSGIAAAFHPGLAAAASARA). Thr48 is modified (phosphothreonine). Lys59 carries the N6-acetyllysine modification. Gly65 contacts substrate. N6-acetyllysine; alternate is present on Lys73. The residue at position 73 (Lys73) is an N6-succinyllysine; alternate. Lys82 carries the N6-acetyllysine modification. Lys90 is modified (N6-acetyllysine; alternate). Lys90 carries the N6-succinyllysine; alternate modification. Tyr96 is modified (3'-nitrotyrosine; alternate). Tyr96 is modified (phosphotyrosine; alternate). N6-acetyllysine; alternate is present on residues Lys107 and Lys122. Lys107 and Lys122 each carry N6-succinyllysine; alternate. Ser143 is subject to Phosphoserine. Lys159 is modified (N6-acetyllysine; alternate). The residue at position 159 (Lys159) is an N6-succinyllysine; alternate. Residue Trp162 participates in substrate binding. Lys185 is modified (N6-acetyllysine; alternate). An N6-succinyllysine; alternate modification is found at Lys185. Position 215 (Asn215) interacts with substrate. The residue at position 227 (Lys227) is an N6-succinyllysine. Residue Lys234 is modified to N6-acetyllysine. 2 positions are modified to N6-acetyllysine; alternate: Lys279 and Lys296. Lys279 is subject to N6-(pyridoxal phosphate)lysine; alternate. N6-succinyllysine; alternate is present on Lys296. Lys302 bears the N6-acetyllysine mark. Lys309 is modified (N6-acetyllysine; alternate). At Lys309 the chain carries N6-succinyllysine; alternate. Arg313 carries the asymmetric dimethylarginine modification. Thr333 bears the Phosphothreonine mark. The residue at position 338 (Lys338) is an N6-acetyllysine; alternate. Residue Lys338 is modified to N6-succinyllysine; alternate. The residue at position 345 (Lys345) is an N6-acetyllysine. At Lys363 the chain carries N6-acetyllysine; alternate. Position 363 is an N6-succinyllysine; alternate (Lys363). 2 positions are modified to N6-acetyllysine: Lys364 and Lys387. Lys396 and Lys404 each carry N6-acetyllysine; alternate. Lys396 and Lys404 each carry N6-succinyllysine; alternate. A substrate-binding site is contributed by Arg407.

It belongs to the class-I pyridoxal-phosphate-dependent aminotransferase family. As to quaternary structure, homodimer. Requires pyridoxal 5'-phosphate as cofactor.

The protein localises to the mitochondrion matrix. The protein resides in the cell membrane. It catalyses the reaction L-aspartate + 2-oxoglutarate = oxaloacetate + L-glutamate. The catalysed reaction is L-kynurenine + 2-oxoglutarate = kynurenate + L-glutamate + H2O. Functionally, catalyzes the irreversible transamination of the L-tryptophan metabolite L-kynurenine to form kynurenic acid (KA). As a member of the malate-aspartate shuttle, it has a key role in the intracellular NAD(H) redox balance. Is important for metabolite exchange between mitochondria and cytosol, and for amino acid metabolism. Facilitates cellular uptake of long-chain free fatty acids. The polypeptide is Aspartate aminotransferase, mitochondrial (GOT2) (Macaca fascicularis (Crab-eating macaque)).